The sequence spans 153 residues: UPF0260 protein YcgN (153 aa).

Belongs to the UPF0260 family.

The polypeptide is UPF0260 protein YcgN (Salmonella agona (strain SL483)).